A 36-amino-acid polypeptide reads, in one-letter code: Mu/omega-theraphotoxin-Pmu1a (36 aa).

Intrachain disulfides connect C2–C16, C9–C21, and C15–C29.

It belongs to the neurotoxin 10 (Hwtx-1) family. In terms of tissue distribution, expressed by the venom gland.

The protein resides in the secreted. Its function is as follows. Gating-modifier toxin that targets both voltage-gated sodium and calcium channels, with described activities on human Nav1.7/SCN9A (IC(50)=5.5-7 nM), hNav1.6/SCN10A (IC(50)=9.9 nM), hNav1.4/SCN4A (IC(50)=62.9 nM), hCav3.2/CACNA1H (IC(50)=955.4 nM or 63.5% inhibition at 10 uM), hCav3.1/CACNA1G (95.1% inhibition at 10 uM), hCav3.3/CACNA1I (90.8% inhibition at 10 uM). Acts on Cav3 currents mainly by inducing a strong depolarizing shift in the current-voltage curve. The sequence is that of Mu/omega-theraphotoxin-Pmu1a from Pterinochilus murinus (Mombasa golden starburst baboon spider).